Reading from the N-terminus, the 135-residue chain is MGFHMGRQLLLSGFLLVMLQMVTQTQARPQDVITVAGEETEVVIKREGDDDGDDDDSSSEETVEDSEESRRRRREVNTDNTPSARAVIPGEQVVPILLEAILPSVDAAGDRFARSVQFLKNLTPGSELFAVEKNE.

Positions 1–27 (MGFHMGRQLLLSGFLLVMLQMVTQTQA) are cleaved as a signal peptide. A disordered region spans residues 43 to 84 (VIKREGDDDGDDDDSSSEETVEDSEESRRRRREVNTDNTPSA). A compositionally biased stretch (acidic residues) spans 49–67 (DDDGDDDDSSSEETVEDSE).

As to expression, antenna. In the third antennal segment. Expressed in sencilla coeloconica.

The polypeptide is Antennal-specific protein OS-C (Os-C) (Drosophila melanogaster (Fruit fly)).